Consider the following 795-residue polypeptide: TBC1 domain family member 5 (795 aa).

Basic and acidic residues predominate over residues 1-13 (MYHSLSETRHPLQ). The disordered stretch occupies residues 1 to 49 (MYHSLSETRHPLQPEEQEVGIDPLSSYSNKSGGDSNKNGRRTSSTLDSE). The span at 25 to 49 (SSYSNKSGGDSNKNGRRTSSTLDSE) shows a compositional bias: polar residues. The residue at position 42 (T42) is a Phosphothreonine. Phosphoserine occurs at positions 43 and 44. The interval 56 to 64 (RKEWEELFV) is required for interaction with retromer; involved in interaction with ATG8 family proteins. An LIR 1 motif is present at residues 57 to 62 (KEWEEL). One can recognise a Rab-GAP TBC domain in the interval 81–359 (LRSSRFRSIC…VVWDALFADG (279 aa)). S460 is subject to Phosphoserine. The interval 475 to 564 (PGSAGGPVPG…PPSSATKKDS (90 aa)) is disordered. Over residues 484 to 496 (GGNSSSSSSVVIP) the composition is skewed to low complexity. Residues S522, S539, S541, S544, S554, S570, S584, and S730 each carry the phosphoserine modification. The segment covering 523 to 542 (MPVQLNKGLSSKNISSSPSV) has biased composition (polar residues). Residues 554 to 564 (SPPSSATKKDS) are compositionally biased toward polar residues. The interval 674-795 (HYCSSGQGQG…GFTIVSPLDI (122 aa)) is disordered. A compositionally biased stretch (polar residues) spans 727–748 (ARGSFSGQAQPLRTLRSTSGKS). Residues 765–776 (PASASSSNPSSS) show a composition bias toward low complexity. The LIR 2 signature appears at 785–789 (SGFTI). Residues 786-791 (GFTIVS) are required for interaction with ATG8 family proteins. At S791 the chain carries Phosphoserine.

As to quaternary structure, interacts with MAP1LC3A, MAP1LC3B, MAP1LC3C, GABARAP, GABARAPL1, GABARAPL2. Interacts with VPS29 and VPS35; indicative for an association with retromer CSC subcomplex. MAP1LC3A and VPS29 compete for binding to TBC1D5. Interacts with AP2M1; indicative for an association with the AP2 complex. Interacts with ULK1 and ATG13 (phosphorylated); indicative for an association with the activated ULK1-ATG13-FIP200 complex. Interacts with ATG9A; the interactions seems to be restricted to the AP2-clathrin-associated fraction of ATG9A.

The protein resides in the endosome membrane. It localises to the cytoplasmic vesicle. The protein localises to the autophagosome. In terms of biological role, may act as a GTPase-activating protein (GAP) for Rab family protein(s). May act as a GAP for RAB7A. Can displace RAB7A and retromer CSC subcomplex from the endosomal membrane to the cytosol; at least retromer displacement seems to require its catalytic activity. Required for retrograde transport of cargo proteins from endosomes to the trans-Golgi network (TGN); the function seems to require its catalytic activity. Involved in regulation of autophagy. May act as a molecular switch between endosomal and autophagosomal transport and is involved in reprogramming vesicle trafficking upon autophagy induction. Involved in the trafficking of ATG9A upon activation of autophagy. May regulate the recruitment of ATG9A-AP2-containing vesicles to autophagic membranes. The chain is TBC1 domain family member 5 (TBC1D5) from Homo sapiens (Human).